We begin with the raw amino-acid sequence, 388 residues long: Succinate--CoA ligase [ADP-forming] subunit beta (388 aa).

In terms of domain architecture, ATP-grasp spans 9–244 (KQLFARYGLP…QSQEDPREAQ (236 aa)). ATP contacts are provided by residues K46, 53-55 (GRG), E99, T102, and E107. Residues N199 and D213 each coordinate Mg(2+). Residues N264 and 321–323 (GIV) contribute to the substrate site.

Belongs to the succinate/malate CoA ligase beta subunit family. Heterotetramer of two alpha and two beta subunits. It depends on Mg(2+) as a cofactor.

It catalyses the reaction succinate + ATP + CoA = succinyl-CoA + ADP + phosphate. The catalysed reaction is GTP + succinate + CoA = succinyl-CoA + GDP + phosphate. It functions in the pathway carbohydrate metabolism; tricarboxylic acid cycle; succinate from succinyl-CoA (ligase route): step 1/1. In terms of biological role, succinyl-CoA synthetase functions in the citric acid cycle (TCA), coupling the hydrolysis of succinyl-CoA to the synthesis of either ATP or GTP and thus represents the only step of substrate-level phosphorylation in the TCA. The beta subunit provides nucleotide specificity of the enzyme and binds the substrate succinate, while the binding sites for coenzyme A and phosphate are found in the alpha subunit. The chain is Succinate--CoA ligase [ADP-forming] subunit beta from Escherichia coli O139:H28 (strain E24377A / ETEC).